A 702-amino-acid chain; its full sequence is Methionine--tRNA ligase (702 aa).

Positions 23–33 match the 'HIGH' region motif; it reads PYANGPLHLGH. 4 residues coordinate Zn(2+): cysteine 154, cysteine 157, cysteine 167, and cysteine 170. The short motif at 341 to 345 is the 'KMSKS' region element; the sequence is KMSKS. Residue lysine 344 participates in ATP binding. Positions 562–593 are disordered; that stretch reads LAPPPASAKQQNASMSNTAPPPTAEEPETTAP. Residues 569–578 are compositionally biased toward polar residues; that stretch reads AKQQNASMSN. Positions 599-702 constitute a tRNA-binding domain; that stretch reads DFAKLDLRIG…SSAQPGMPVR (104 aa).

It belongs to the class-I aminoacyl-tRNA synthetase family. MetG type 1 subfamily. Homodimer. It depends on Zn(2+) as a cofactor.

The protein resides in the cytoplasm. It carries out the reaction tRNA(Met) + L-methionine + ATP = L-methionyl-tRNA(Met) + AMP + diphosphate. Its function is as follows. Is required not only for elongation of protein synthesis but also for the initiation of all mRNA translation through initiator tRNA(fMet) aminoacylation. This is Methionine--tRNA ligase from Xylella fastidiosa (strain M12).